The primary structure comprises 1260 residues: Agglutinin-like protein 1 (1260 aa).

Residues 1–17 (MLQQFTLLFLYLSIASA) form the signal peptide. Intrachain disulfides connect cysteine 73–cysteine 150, cysteine 96–cysteine 112, cysteine 205–cysteine 298, and cysteine 227–cysteine 256. ALS repeat units follow at residues 365–396 (TTITTSYVGVTTSYSTKTAPIGETATVIVDVP), 401–432 (TTVTSEWTGTITTTTTRTNPTDSIDTVVVQVP), and 438–469 (VSTTEYWSQSYATTTTVTAPPGGTDTVIIREP). N-linked (GlcNAc...) asparagine glycosylation occurs at asparagine 471. Residues 474–505 (VTTTEYWSQSFATTTTVTAPPGETDTVIIREP) form an ALS 4 repeat. The N-linked (GlcNAc...) asparagine glycan is linked to asparagine 507. An ALS 5 repeat occupies 510-541 (VTTTEYWSQSYATTTTVTAPPGGTDTVLIREP). Residue asparagine 543 is glycosylated (N-linked (GlcNAc...) asparagine). One copy of the ALS 6 repeat lies at 546–577 (VTTTEYWSQSYATTTTVTAPPGGTDTVIIREP). Asparagine 579 carries N-linked (GlcNAc...) asparagine glycosylation. The stretch at 582-613 (VTTTEYWSQSYATTTTITAPPGETDTVIIREP) is one ALS 7 repeat. Residue asparagine 615 is glycosylated (N-linked (GlcNAc...) asparagine). Residues 618-649 (VTTTEYWSQSYATTTTVTAPPGGTDTVLIREP) form an ALS 8 repeat. The N-linked (GlcNAc...) asparagine glycan is linked to asparagine 651. The ALS 9 repeat unit spans residues 654 to 685 (VTTTEYWSQSYATTTTVTAPPGGTDTVLIREP). N-linked (GlcNAc...) asparagine glycosylation is present at asparagine 687. One copy of the ALS 10 repeat lies at 690-721 (VTTTEYWSQSYATTTTVTAPPGGTDTVIIREP). A glycan (N-linked (GlcNAc...) asparagine) is linked at asparagine 723. Residues 726-757 (VTTTEYWSQSYATTTTVTAPPGGTDTVIIREP) form an ALS 11 repeat. N-linked (GlcNAc...) asparagine glycosylation is present at asparagine 759. The ALS 12 repeat unit spans residues 762–791 (VTTTEYWSQSFATTTTVTAPPGGTDTVIIY). 4 N-linked (GlcNAc...) asparagine glycosylation sites follow: asparagine 820, asparagine 886, asparagine 918, and asparagine 973. Composition is skewed to polar residues over residues 896 to 918 (PTASTMSDSLSSTDGISATSSDN) and 964 to 979 (KVTFTSNGDNQSGTHD). Disordered regions lie at residues 896-924 (PTASTMSDSLSSTDGISATSSDNVSKSGV) and 954-1226 (SIPS…SSSP). Positions 980–995 (SQSTSTEIEIVTTSST) are enriched in low complexity. Over residues 1002–1062 (VSSNTDLTSE…PTVATSTLAS (61 aa)) the composition is skewed to polar residues. N-linked (GlcNAc...) asparagine glycans are attached at residues asparagine 1045 and asparagine 1068. Residues 1073 to 1090 (HESASTSLKPSMGENSGL) are compositionally biased toward polar residues. Residues 1091 to 1110 (TTSTEIEATTTSPTEAPSPA) show a composition bias toward low complexity. The span at 1111–1154 (VSSGTDVTTEPTDTREQPTTLSTTSKTNSESVATTQATNENGGK) shows a compositional bias: polar residues. Low complexity-rich tracts occupy residues 1155-1176 (SPSTDLTSSLTTGTSASTSANS) and 1197-1226 (SHSTSVTNSNSIVSNTPQTTLSQQVTSSSP). The GPI-anchor amidated glycine moiety is linked to residue glycine 1238. Residues 1239-1260 (SGSIIQHSTWLYGLITLLSLFI) constitute a propeptide, removed in mature form.

This sequence belongs to the ALS family. Post-translationally, the GPI-anchor is attached to the protein in the endoplasmic reticulum and serves to target the protein to the cell surface. There, the glucosamine-inositol phospholipid moiety is cleaved off and the GPI-modified mannoprotein is covalently attached via its lipidless GPI glycan remnant to the 1,6-beta-glucan of the outer cell wall layer.

The protein resides in the cell membrane. Its subcellular location is the secreted. The protein localises to the cell wall. Its function is as follows. Major cell surface adhesion protein which mediates both yeast-to-host tissue adherence and yeast aggregation. Acts as a downstream effector of the EFG1 regulatory pathway. Required for rapamycin-induced aggregation of C.albicans. Binds glycans and mediates adherence to endothelial and epithelial cells, thereby playing an important role in the pathogenesis of C.albicans infections. The chain is Agglutinin-like protein 1 (ALS1) from Candida albicans (strain SC5314 / ATCC MYA-2876) (Yeast).